Here is a 102-residue protein sequence, read N- to C-terminus: Large ribosomal subunit protein bL21 (102 aa).

The protein belongs to the bacterial ribosomal protein bL21 family. As to quaternary structure, part of the 50S ribosomal subunit. Contacts protein L20.

This protein binds to 23S rRNA in the presence of protein L20. The protein is Large ribosomal subunit protein bL21 of Campylobacter jejuni subsp. jejuni serotype O:6 (strain 81116 / NCTC 11828).